Here is a 298-residue protein sequence, read N- to C-terminus: UDP-N-acetylenolpyruvoylglucosamine reductase (298 aa).

Residues 26 to 190 (RAGGPAERLY…VAAVLDLEPG (165 aa)) enclose the FAD-binding PCMH-type domain. Arginine 170 is a catalytic residue. Serine 219 serves as the catalytic Proton donor. Residue glutamate 289 is part of the active site.

This sequence belongs to the MurB family. FAD serves as cofactor.

The protein localises to the cytoplasm. The enzyme catalyses UDP-N-acetyl-alpha-D-muramate + NADP(+) = UDP-N-acetyl-3-O-(1-carboxyvinyl)-alpha-D-glucosamine + NADPH + H(+). The protein operates within cell wall biogenesis; peptidoglycan biosynthesis. Functionally, cell wall formation. In Alkalilimnicola ehrlichii (strain ATCC BAA-1101 / DSM 17681 / MLHE-1), this protein is UDP-N-acetylenolpyruvoylglucosamine reductase.